Consider the following 235-residue polypeptide: Aspartate/glutamate leucyltransferase (235 aa).

Belongs to the R-transferase family. Bpt subfamily.

Its subcellular location is the cytoplasm. The enzyme catalyses N-terminal L-glutamyl-[protein] + L-leucyl-tRNA(Leu) = N-terminal L-leucyl-L-glutamyl-[protein] + tRNA(Leu) + H(+). It carries out the reaction N-terminal L-aspartyl-[protein] + L-leucyl-tRNA(Leu) = N-terminal L-leucyl-L-aspartyl-[protein] + tRNA(Leu) + H(+). Functionally, functions in the N-end rule pathway of protein degradation where it conjugates Leu from its aminoacyl-tRNA to the N-termini of proteins containing an N-terminal aspartate or glutamate. In Pseudomonas savastanoi pv. phaseolicola (strain 1448A / Race 6) (Pseudomonas syringae pv. phaseolicola (strain 1448A / Race 6)), this protein is Aspartate/glutamate leucyltransferase.